The sequence spans 143 residues: Hemoglobin subunit alpha-2 (143 aa).

At serine 2 the chain carries N-acetylserine. Positions 2–143 constitute a Globin domain; it reads SLSSKQKATV…LALALAEKYR (142 aa). Histidine 60 contacts O2. Histidine 89 serves as a coordination point for heme b.

Belongs to the globin family. As to quaternary structure, hb 2 is a heterotetramer of two alpha-2 and two beta-2 chains. Red blood cells.

Its function is as follows. Involved in oxygen transport from gills to the various peripheral tissues. This is Hemoglobin subunit alpha-2 (hba2) from Gadus morhua (Atlantic cod).